Reading from the N-terminus, the 298-residue chain is Lipoyl synthase (298 aa).

Residues Cys40, Cys45, Cys51, Cys67, Cys71, Cys74, and Ser280 each contribute to the [4Fe-4S] cluster site. One can recognise a Radical SAM core domain in the interval 53-269; that stretch reads AVRRTATFMI…KEIAMQKGFS (217 aa).

Belongs to the radical SAM superfamily. Lipoyl synthase family. [4Fe-4S] cluster is required as a cofactor.

It localises to the cytoplasm. The enzyme catalyses [[Fe-S] cluster scaffold protein carrying a second [4Fe-4S](2+) cluster] + N(6)-octanoyl-L-lysyl-[protein] + 2 oxidized [2Fe-2S]-[ferredoxin] + 2 S-adenosyl-L-methionine + 4 H(+) = [[Fe-S] cluster scaffold protein] + N(6)-[(R)-dihydrolipoyl]-L-lysyl-[protein] + 4 Fe(3+) + 2 hydrogen sulfide + 2 5'-deoxyadenosine + 2 L-methionine + 2 reduced [2Fe-2S]-[ferredoxin]. It participates in protein modification; protein lipoylation via endogenous pathway; protein N(6)-(lipoyl)lysine from octanoyl-[acyl-carrier-protein]. Catalyzes the radical-mediated insertion of two sulfur atoms into the C-6 and C-8 positions of the octanoyl moiety bound to the lipoyl domains of lipoate-dependent enzymes, thereby converting the octanoylated domains into lipoylated derivatives. This is Lipoyl synthase from Bacillus velezensis (strain DSM 23117 / BGSC 10A6 / LMG 26770 / FZB42) (Bacillus amyloliquefaciens subsp. plantarum).